The sequence spans 360 residues: Tubulin-like protein CetZ2 (360 aa).

Residues 10 to 14 (QAGGK), 65 to 66 (GG), 106 to 108 (GSG), glutamate 138, asparagine 165, and asparagine 183 contribute to the GTP site. Residues 334–354 (EAIDKAETEPREDPKGMWHSD) show a composition bias toward basic and acidic residues. The segment at 334–360 (EAIDKAETEPREDPKGMWHSDDLDDLL) is disordered.

Belongs to the CetZ family.

Its subcellular location is the cytoplasm. Involved in cell shape control. In Haloferax volcanii (strain ATCC 29605 / DSM 3757 / JCM 8879 / NBRC 14742 / NCIMB 2012 / VKM B-1768 / DS2) (Halobacterium volcanii), this protein is Tubulin-like protein CetZ2.